We begin with the raw amino-acid sequence, 559 residues long: 5-epiaristolochene synthase (559 aa).

Residues Asp-312, Asp-316, Asp-455, Thr-459, and Glu-463 each contribute to the Mg(2+) site. Positions 312–316 match the DDXXD motif motif; that stretch reads DDTYD.

Belongs to the terpene synthase family. As to quaternary structure, monomer. Requires Mg(2+) as cofactor. As to expression, expressed only in treated leaves an not detected in control leaves.

The protein localises to the cytoplasm. It carries out the reaction (2E,6E)-farnesyl diphosphate = (+)-5-epi-aristolochene + diphosphate. It participates in secondary metabolite biosynthesis; terpenoid biosynthesis. In terms of biological role, catalyzes the cyclization of trans,trans-farnesyl diphosphate (FPP) to the bicyclic intermediate 5-epi-aristolochene, initial step in the conversion of FPP to the sesquiterpenoid antifungal phytoalexin capsidiol. Produces germacrene A as an enzyme-bound intermediate that is not released by the enzyme, but is further cyclized to produce the bicyclic 5-epi-aristolochene. This chain is 5-epiaristolochene synthase (EAS), found in Capsicum annuum (Capsicum pepper).